Consider the following 317-residue polypeptide: Methionyl-tRNA formyltransferase (317 aa).

111–114 (SLLP) lines the (6S)-5,6,7,8-tetrahydrofolate pocket.

It belongs to the Fmt family.

The enzyme catalyses L-methionyl-tRNA(fMet) + (6R)-10-formyltetrahydrofolate = N-formyl-L-methionyl-tRNA(fMet) + (6S)-5,6,7,8-tetrahydrofolate + H(+). In terms of biological role, attaches a formyl group to the free amino group of methionyl-tRNA(fMet). The formyl group appears to play a dual role in the initiator identity of N-formylmethionyl-tRNA by promoting its recognition by IF2 and preventing the misappropriation of this tRNA by the elongation apparatus. The chain is Methionyl-tRNA formyltransferase from Chlorobium phaeobacteroides (strain BS1).